The primary structure comprises 660 residues: GTP-binding protein BRASSINAZOLE INSENSITIVE PALE GREEN 2, chloroplastic (660 aa).

The N-terminal 53 residues, M1 to M53, are a transit peptide targeting the chloroplast. Disordered regions lie at residues E127–M158 and N191–K212. Acidic residues predominate over residues E130–M158. The region spanning S273–P457 is the CP-type G domain.

The protein belongs to the TRAFAC class YlqF/YawG GTPase family. Binds to chloroplast 16S and 23S ribosomal RNAs. In terms of tissue distribution, mostly expressed in stems, petioles, leaves and flowers and, at low levels, also in roots.

It localises to the plastid. It is found in the chloroplast stroma. In terms of biological role, required for brassinosteroid- (BR) mediated post-transcriptional and translational regulation in the chloroplast, including accumulation of chloroplast rRNA. Involved in chloroplast differentiation. The polypeptide is GTP-binding protein BRASSINAZOLE INSENSITIVE PALE GREEN 2, chloroplastic (Arabidopsis thaliana (Mouse-ear cress)).